A 117-amino-acid polypeptide reads, in one-letter code: Large ribosomal subunit protein uL18 (117 aa).

It belongs to the universal ribosomal protein uL18 family. Part of the 50S ribosomal subunit; part of the 5S rRNA/L5/L18/L25 subcomplex. Contacts the 5S and 23S rRNAs.

In terms of biological role, this is one of the proteins that bind and probably mediate the attachment of the 5S RNA into the large ribosomal subunit, where it forms part of the central protuberance. The polypeptide is Large ribosomal subunit protein uL18 (Mannheimia succiniciproducens (strain KCTC 0769BP / MBEL55E)).